The following is a 573-amino-acid chain: 2-succinyl-5-enolpyruvyl-6-hydroxy-3-cyclohexene-1-carboxylate synthase (573 aa).

It belongs to the TPP enzyme family. MenD subfamily. In terms of assembly, homodimer. Requires Mg(2+) as cofactor. It depends on Mn(2+) as a cofactor. The cofactor is thiamine diphosphate.

The enzyme catalyses isochorismate + 2-oxoglutarate + H(+) = 5-enolpyruvoyl-6-hydroxy-2-succinyl-cyclohex-3-ene-1-carboxylate + CO2. Its pathway is quinol/quinone metabolism; 1,4-dihydroxy-2-naphthoate biosynthesis; 1,4-dihydroxy-2-naphthoate from chorismate: step 2/7. The protein operates within quinol/quinone metabolism; menaquinone biosynthesis. Functionally, catalyzes the thiamine diphosphate-dependent decarboxylation of 2-oxoglutarate and the subsequent addition of the resulting succinic semialdehyde-thiamine pyrophosphate anion to isochorismate to yield 2-succinyl-5-enolpyruvyl-6-hydroxy-3-cyclohexene-1-carboxylate (SEPHCHC). This is 2-succinyl-5-enolpyruvyl-6-hydroxy-3-cyclohexene-1-carboxylate synthase from Shewanella sp. (strain W3-18-1).